Here is a 172-residue protein sequence, read N- to C-terminus: Small ribosomal subunit protein uS5 (172 aa).

The S5 DRBM domain occupies 16-79 (LKEKLVHINR…EDGKKNVVKV (64 aa)).

This sequence belongs to the universal ribosomal protein uS5 family. As to quaternary structure, part of the 30S ribosomal subunit. Contacts proteins S4 and S8.

In terms of biological role, with S4 and S12 plays an important role in translational accuracy. Functionally, located at the back of the 30S subunit body where it stabilizes the conformation of the head with respect to the body. The polypeptide is Small ribosomal subunit protein uS5 (Prosthecochloris aestuarii (strain DSM 271 / SK 413)).